The primary structure comprises 452 residues: Phosphoglucosamine mutase (452 aa).

The active-site Phosphoserine intermediate is the S104. Mg(2+)-binding residues include S104, D244, D246, and D248. S104 is subject to Phosphoserine.

It belongs to the phosphohexose mutase family. It depends on Mg(2+) as a cofactor. In terms of processing, activated by phosphorylation.

The catalysed reaction is alpha-D-glucosamine 1-phosphate = D-glucosamine 6-phosphate. Catalyzes the conversion of glucosamine-6-phosphate to glucosamine-1-phosphate. The chain is Phosphoglucosamine mutase from Pediococcus pentosaceus (strain ATCC 25745 / CCUG 21536 / LMG 10740 / 183-1w).